A 144-amino-acid chain; its full sequence is Monooxygenase ptaG (144 aa).

Belongs to the avfA family.

Its pathway is secondary metabolite biosynthesis. Its function is as follows. Monooxygenase; part of the gene cluster that mediates the biosynthesis of pestheic acid, a diphenyl ether which is a biosynthetic precursor of the unique chloropupukeananes. The biosynthesis initiates from condensation of acetate and malonate units catalyzed by the non-reducing PKS ptaA. As the ptaA protein is TE/CLC domain-deficient, hydrolysis and Claisen cyclization of the polyketide could be catalyzed by ptaB containing a beta-lactamase domain. The ptaB protein might hydrolyze the thioester bond between the ACP of ptaA and the intermediate to release atrochrysone carboxylic acid, which is spontaneously dehydrated to form endocrocin anthrone. Endocrocin anthrone is then converted to endocrocin, catalyzed by the anthrone oxygenase ptaC. Spontaneous decarboxylation of endocrocin occurs to generate emodin. An O-methyltransferase (ptaH or ptaI) could methylate emodin to form physcion. PtaJ could then catalyze the oxidative cleavage of physcion, and rotation of the intermediate could then afford desmethylisosulochrin. PtaF, a putative NADH-dependent oxidoreductase, might also participate in the oxidative cleavage step. Desmethylisosulochrin is then transformed by another O-methyltransferase (ptaH or ptaI) to form isosulochrin. Chlorination of isosulochrin by ptaM in the cyclohexadienone B ring then produces chloroisosulochrin. PtaE is responsible for the oxidative coupling reactions of both benzophenones isosulochrin and chloroisosulochrin to RES-1214-1 and pestheic acid respectively, regardless of chlorination. In Pestalotiopsis fici (strain W106-1 / CGMCC3.15140), this protein is Monooxygenase ptaG.